A 638-amino-acid chain; its full sequence is Signal recognition particle receptor subunit alpha (638 aa).

Disordered regions lie at residues 129–205 (KIRA…VELS), 218–245 (IQKH…KKAP), and 262–315 (SAPT…ATKG). Composition is skewed to basic and acidic residues over residues 137–146 (KKFEDSEKAK) and 153–165 (IETR…EKAK). At S177 the chain carries Phosphoserine. The segment covering 218 to 239 (IQKHGRGLEKSSKSTKSDAPKE) has biased composition (basic and acidic residues). T284 bears the Phosphothreonine mark. Phosphoserine occurs at positions 296, 297, and 298. Positions 304 to 314 (AQNASKPSATK) are enriched in polar residues. The NG domain stretch occupies residues 419-636 (YVVTFCGVNG…NAKAVVAALM (218 aa)). Residue 425–432 (GVNGVGKS) coordinates GTP. S473 carries the phosphoserine modification. 520 to 524 (DTAGR) provides a ligand contact to GTP. T578 carries the phosphothreonine modification. Residue 588-591 (TKFD) participates in GTP binding.

This sequence belongs to the GTP-binding SRP family. In terms of assembly, heterodimer with SRPRB. Interacts with the signal recognition particle (SRP) complex subunit SRP54.

The protein resides in the endoplasmic reticulum membrane. Functionally, component of the SRP (signal recognition particle) receptor. Ensures, in conjunction with the signal recognition particle, the correct targeting of the nascent secretory proteins to the endoplasmic reticulum membrane system. Forms a guanosine 5'-triphosphate (GTP)-dependent complex with the SRP subunit SRP54. SRP receptor compaction and GTPase rearrangement drive SRP-mediated cotranslational protein translocation into the ER. In Canis lupus familiaris (Dog), this protein is Signal recognition particle receptor subunit alpha.